The chain runs to 134 residues: Interleukin-5 (134 aa).

A signal peptide spans 1 to 19; sequence MRMLLHLSLLALGAAYVYA. Threonine 22 is a glycosylation site (O-linked (GalNAc...) threonine). Asparagine 47 and asparagine 90 each carry an N-linked (GlcNAc...) asparagine glycan.

Belongs to the IL-5 family. Homodimer; disulfide-linked. Interacts with IL5RA. Interacts with CSF2RB.

Its subcellular location is the secreted. Homodimeric cytokine expressed predominantly by T-lymphocytes and NK cells that plays an important role in the survival, differentiation, and chemotaxis of eosinophils. Also acts on activated and resting B-cells to induce immunoglobulin production, growth, and differentiation. Mechanistically, exerts its biological effects through a receptor composed of IL5RA subunit and the cytokine receptor common subunit beta/CSF2RB. Binding to the receptor leads to activation of various kinases including LYN, SYK and JAK2 and thereby propagates signals through the RAS-MAPK and JAK-STAT5 pathways respectively. In Macaca mulatta (Rhesus macaque), this protein is Interleukin-5 (IL5).